We begin with the raw amino-acid sequence, 142 residues long: MGQGKFAARKLVRDSKKFRWSDKNYARRELNLDVKSDPLEGAPQARGIVLEKVGVEAKQPNSAIRKCVRVQLIKNGRQVTAFAVGDGAINFIDEHDEVEIEGIGGRLGRSMGDIPGVRYVVTSVNNVCLHEMVIGRKEKPRR.

It belongs to the universal ribosomal protein uS12 family. Part of the 30S ribosomal subunit.

Its function is as follows. With S4 and S5 plays an important role in translational accuracy. Located at the interface of the 30S and 50S subunits. The protein is Small ribosomal subunit protein uS12 of Methanoregula boonei (strain DSM 21154 / JCM 14090 / 6A8).